Reading from the N-terminus, the 126-residue chain is Precursor of CEP2 (126 aa).

Residues 1-19 form the signal peptide; the sequence is MKLFIITVVTILTISRVFD. The propeptide occupies 20 to 80; the sequence is KTPATTEARK…ENNLKNRFIN (61 aa). 2 positions are modified to hydroxyproline: proline 84 and proline 87. The propeptide occupies 96 to 105; the sequence is PRVLNNKFTN. Hydroxyproline occurs at positions 109, 112, and 116. Positions 121–126 are excised as a propeptide; it reads PGVVNV.

Belongs to the C-terminally encoded plant signaling peptide (CEP) family. As to quaternary structure, interacts with CEP receptors (e.g. CEPR1 and CEPR2). Post-translationally, the mature small signaling peptide is generated by proteolytic processing of the longer precursor. As to expression, mostly expressed in roots. Present in cotyledons, shoot apical meristem (SAM), leaves, inflorescence stems and flowers.

The protein localises to the secreted. It is found in the extracellular space. The protein resides in the apoplast. Its function is as follows. Extracellular signaling peptide that represses primary root growth rate. Negatively regulates the number of leaves and flowering, and modulates leaf morphology. Regulates systemic nitrogen (N)-demand signaling. Mediates up-regulation of genes involved in N uptake and assimilation pathways. The protein is Precursor of CEP2 of Arabidopsis thaliana (Mouse-ear cress).